Reading from the N-terminus, the 122-residue chain is N(2)-fixation sustaining protein CowN (122 aa).

The protein belongs to the CowN family.

Its function is as follows. Is required to sustain N(2)-dependent growth in the presence of low levels of carbon monoxide (CO). Probably acts by protecting the N(2) fixation ability of the nitrogenase complex, which is inactivated in the presence of CO. The polypeptide is N(2)-fixation sustaining protein CowN (Azorhizobium caulinodans (strain ATCC 43989 / DSM 5975 / JCM 20966 / LMG 6465 / NBRC 14845 / NCIMB 13405 / ORS 571)).